The sequence spans 328 residues: DNA-directed RNA polymerase subunit alpha (328 aa).

Residues 1-231 are alpha N-terminal domain (alpha-NTD); sequence MIYQMQMPEK…EHVSLFANFS (231 aa). Residues 252-328 are alpha C-terminal domain (alpha-CTD); it reads MRKMLLTRIE…MDITKYQMKG (77 aa).

The protein belongs to the RNA polymerase alpha chain family. In terms of assembly, homodimer. The RNAP catalytic core consists of 2 alpha, 1 beta, 1 beta' and 1 omega subunit. When a sigma factor is associated with the core the holoenzyme is formed, which can initiate transcription.

It catalyses the reaction RNA(n) + a ribonucleoside 5'-triphosphate = RNA(n+1) + diphosphate. Functionally, DNA-dependent RNA polymerase catalyzes the transcription of DNA into RNA using the four ribonucleoside triphosphates as substrates. The polypeptide is DNA-directed RNA polymerase subunit alpha (Chlorobium phaeobacteroides (strain BS1)).